The primary structure comprises 880 residues: Translation initiation factor IF-2 (880 aa).

Basic and acidic residues-rich tracts occupy residues 180 to 194 (QEAA…EAAK) and 202 to 228 (LAEE…DHHI). Positions 180–289 (QEAATKRKQD…APESMAHGFN (110 aa)) are disordered. Residues 249-262 (GRRARNKSNAKKRG) show a composition bias toward basic residues. The 170-residue stretch at 380 to 549 (SRAPVVTIMG…LLQAEVLELK (170 aa)) folds into the tr-type G domain. Residues 389 to 396 (GHVDHGKT) form a G1 region. 389 to 396 (GHVDHGKT) contributes to the GTP binding site. The interval 414–418 (GITQH) is G2. Positions 435–438 (DTPG) are G3. GTP contacts are provided by residues 435 to 439 (DTPGH) and 489 to 492 (NKMD). The segment at 489–492 (NKMD) is G4. Residues 525–527 (SAK) are G5.

This sequence belongs to the TRAFAC class translation factor GTPase superfamily. Classic translation factor GTPase family. IF-2 subfamily.

It localises to the cytoplasm. Functionally, one of the essential components for the initiation of protein synthesis. Protects formylmethionyl-tRNA from spontaneous hydrolysis and promotes its binding to the 30S ribosomal subunits. Also involved in the hydrolysis of GTP during the formation of the 70S ribosomal complex. The chain is Translation initiation factor IF-2 from Shewanella baltica (strain OS223).